Reading from the N-terminus, the 321-residue chain is tRNA(Ile)-lysidine synthase (321 aa).

21–26 (SYGSDS) provides a ligand contact to ATP.

This sequence belongs to the tRNA(Ile)-lysidine synthase family.

It localises to the cytoplasm. It catalyses the reaction cytidine(34) in tRNA(Ile2) + L-lysine + ATP = lysidine(34) in tRNA(Ile2) + AMP + diphosphate + H(+). Its function is as follows. Ligates lysine onto the cytidine present at position 34 of the AUA codon-specific tRNA(Ile) that contains the anticodon CAU, in an ATP-dependent manner. Cytidine is converted to lysidine, thus changing the amino acid specificity of the tRNA from methionine to isoleucine. This Campylobacter jejuni subsp. jejuni serotype O:2 (strain ATCC 700819 / NCTC 11168) protein is tRNA(Ile)-lysidine synthase.